Consider the following 90-residue polypeptide: MPKRVLTGRVVSDKMDKTVTVLVERRVMHPLYKKFIRRSKKYAAHDEGNVCAMGDLVRIEECPPISKRKAWLVTARNGEPVGAAAEAQGA.

It belongs to the universal ribosomal protein uS17 family. In terms of assembly, part of the 30S ribosomal subunit.

Its function is as follows. One of the primary rRNA binding proteins, it binds specifically to the 5'-end of 16S ribosomal RNA. This Acidiphilium cryptum (strain JF-5) protein is Small ribosomal subunit protein uS17.